The sequence spans 211 residues: LexA repressor (211 aa).

Positions 30–50 (RVEIAREIGFKSPNAAEEHLK) form a DNA-binding region, H-T-H motif. Active-site for autocatalytic cleavage activity residues include S128 and K165.

Belongs to the peptidase S24 family. Homodimer.

The enzyme catalyses Hydrolysis of Ala-|-Gly bond in repressor LexA.. Functionally, represses a number of genes involved in the response to DNA damage (SOS response), including recA and lexA. In the presence of single-stranded DNA, RecA interacts with LexA causing an autocatalytic cleavage which disrupts the DNA-binding part of LexA, leading to derepression of the SOS regulon and eventually DNA repair. This is LexA repressor from Haemophilus ducreyi (strain 35000HP / ATCC 700724).